We begin with the raw amino-acid sequence, 430 residues long: MSTIIDVYAREVLDSRGNPTVEVEVYTEGGAFGRALVPSGASTGEYEAVELRDGDKSRYLGKGVLNAVKNVNEIIAPEIVGFDVTDQAGIDRAMIELDGTPNKGKLGANAILGVSMAVAHAAADFVGLPLYRYLGGFNAKQLPTPMMNIINGGSHADNNVDFQEFMILPVGAPTFKESIRMGAEVFHALKAVLHDKGLNTAVGDEGGFAPNLGSNREALEVIIEAIEKAGYKAGEDVFLGMDVASSEFYNKETGKYDLSGEGRSMTSAEMVDFYEELCKDFPIISIEDGLDENDWDGHKLLTERLGKKVQLVGDDLFVTNTKKLAEGIEKGISNSILIKVNQIGTLTETFEAIEMAKRAGYTAVVSHRSGETEDATIADIAVATNAGQIKTGSMSRTDRIAKYNQLLRIEDELGEIAVYDGLKSFYNLKK.

Residue Q163 coordinates (2R)-2-phosphoglycerate. E205 acts as the Proton donor in catalysis. Residues D242, E287, and D314 each contribute to the Mg(2+) site. Positions 339, 368, 369, and 390 each coordinate (2R)-2-phosphoglycerate. Catalysis depends on K339, which acts as the Proton acceptor.

This sequence belongs to the enolase family. The cofactor is Mg(2+).

The protein localises to the cytoplasm. It is found in the secreted. The protein resides in the cell surface. The enzyme catalyses (2R)-2-phosphoglycerate = phosphoenolpyruvate + H2O. It participates in carbohydrate degradation; glycolysis; pyruvate from D-glyceraldehyde 3-phosphate: step 4/5. Its function is as follows. Catalyzes the reversible conversion of 2-phosphoglycerate (2-PG) into phosphoenolpyruvate (PEP). It is essential for the degradation of carbohydrates via glycolysis. The chain is Enolase from Bacillus cytotoxicus (strain DSM 22905 / CIP 110041 / 391-98 / NVH 391-98).